The sequence spans 301 residues: uncharacterized protein (301 aa).

Residues Ser-44 and Tyr-107 each act as charge relay system in the active site. Residue Tyr-133 is the Proton donor of the active site. The Schiff-base intermediate with substrate role is filled by Lys-162.

It belongs to the DapA family. Homotetramer.

It is found in the cytoplasm. This is an uncharacterized protein from Pyrobaculum islandicum (strain DSM 4184 / JCM 9189 / GEO3).